A 761-amino-acid polypeptide reads, in one-letter code: Disintegrin and metalloproteinase domain-containing protein 24 (761 aa).

The first 34 residues, 1 to 34, serve as a signal peptide directing secretion; sequence MVAMSEALVHARITLLQAWLRMLLFSSVWPPTWC. The propeptide occupies 35–200; it reads AEYKGPPETV…GKSTRMQSIY (166 aa). The Extracellular segment spans residues 35–697; it reads AEYKGPPETV…SKKDAPEKPN (663 aa). Asn140 is a glycosylation site (N-linked (GlcNAc...) asparagine). Residues 172–179 carry the Cysteine switch motif; the sequence is MRCGLTDE. Zn(2+) is bound at residue Cys174. Residues 208–400 form the Peptidase M12B domain; that stretch reads LYIKLALVID…KSCIHREPRP (193 aa). 2 N-linked (GlcNAc...) asparagine glycosylation sites follow: Asn227 and Asn301. 7 disulfide bridges follow: Cys323/Cys393, Cys357/Cys379, Cys359/Cys364, Cys465/Cys485, Cys635/Cys646, Cys640/Cys652, and Cys654/Cys663. Residue His342 coordinates Zn(2+). Residue Glu343 is part of the active site. Residues His346 and His352 each contribute to the Zn(2+) site. Residues Asn378, Asn390, and Asn479 are each glycosylated (N-linked (GlcNAc...) asparagine). The 88-residue stretch at 406-493 folds into the Disintegrin domain; that stretch reads LKVCGNGIVE…ECPEDLFVQD (88 aa). The 34-residue stretch at 631 to 664 folds into the EGF-like domain; it reads WVNDCTPETCNMKGVCNNKQHCHCDVGWSPPNCQ. A helical transmembrane segment spans residues 698–718; the sequence is VIIWLLPIICVAVVLSVLFCL. Residues 719–761 lie on the Cytoplasmic side of the membrane; the sequence is SGATKKSREAAASQPAEERVKPPYEGAEPSYETVKPPDEWANP. Residues 725–761 form a disordered region; it reads SREAAASQPAEERVKPPYEGAEPSYETVKPPDEWANP.

Monomer. Zn(2+) serves as cofactor. The prodomain is removed during sperm passage through the caput epididymis after the protein has reached the cell surface. Not processed in the secretory pathway. In terms of tissue distribution, expressed exclusively in testis and more specifically on the surface of mature sperm (at protein level).

Its subcellular location is the membrane. Functionally, plasma membrane protease present on mature sperm that may be involved in sperm function during epididymal maturation and/or fertilization. In Mus musculus (Mouse), this protein is Disintegrin and metalloproteinase domain-containing protein 24.